Here is a 474-residue protein sequence, read N- to C-terminus: B-cell CLL/lymphoma 6 member B protein (474 aa).

In terms of domain architecture, BTB spans 38-105 (TDVTLLVGGQ…MYTSRLRLSP (68 aa)). Disordered stretches follow at residues 144 to 190 (PVEV…PDPK) and 210 to 249 (GSLV…GLQS). A compositionally biased stretch (pro residues) spans 150–160 (PRPPTVAPPGS). Positions 162-172 (RRSEGHPDPPT) are enriched in basic and acidic residues. Polar residues-rich tracts occupy residues 173-183 (ESRSCSQGSPS), 210-220 (GSLVGESSGQP), and 240-249 (EEGTTPGLQS). C2H2-type zinc fingers lie at residues 323 to 345 (YKCQ…RTVH), 351 to 373 (YRCS…SRIH), 379 to 401 (YKCE…VLIH), 407 to 429 (YPCP…VRIH), and 435 to 458 (YHCD…RQKH).

In terms of assembly, associates with BCL6 through the BTB domain. As to expression, ubiquitously expressed with higher expression found in heart and lung.

It is found in the nucleus. Acts as a sequence-specific transcriptional repressor in association with BCL6. Necessary for activation of naive T-cells to antigenic stimulation. May attenuate the regulatory effect of BCL6 on antigenic activation of naive CD4 T-cells by forming a heterodimer with BCL6. The protein is B-cell CLL/lymphoma 6 member B protein (Bcl6b) of Mus musculus (Mouse).